Here is a 70-residue protein sequence, read N- to C-terminus: Cold shock-like protein CspH (70 aa).

Residues 7–67 (GIVKTFDCKS…GLRGPTAANV (61 aa)) enclose the CSD domain.

Its subcellular location is the cytoplasm. This chain is Cold shock-like protein CspH (cspH), found in Salmonella typhi.